The sequence spans 373 residues: Probable quinol oxidase subunit 2 (373 aa).

The N-terminal stretch at 1–19 (MSKFKSLLLLFGSLILLSG) is a signal peptide. The N-palmitoyl cysteine moiety is linked to residue Cys20. Residue Cys20 is the site of S-diacylglycerol cysteine attachment. 2 consecutive transmembrane segments (helical) span residues 38–58 (FLIM…LILF) and 82–102 (LETI…IPTV). Composition is skewed to basic and acidic residues over residues 292-320 (EERT…ERHG) and 339-373 (EESH…GGGH). The segment at 292–373 (EERTADVLDK…KKDHENGGGH (82 aa)) is disordered.

This sequence belongs to the cytochrome c oxidase subunit 2 family.

It localises to the cell membrane. It catalyses the reaction 2 a quinol + O2 = 2 a quinone + 2 H2O. Its function is as follows. Catalyzes quinol oxidation with the concomitant reduction of oxygen to water. Subunit II transfers the electrons from a quinol to the binuclear center of the catalytic subunit I. The polypeptide is Probable quinol oxidase subunit 2 (qoxA) (Staphylococcus saprophyticus subsp. saprophyticus (strain ATCC 15305 / DSM 20229 / NCIMB 8711 / NCTC 7292 / S-41)).